The primary structure comprises 155 residues: Small ribosomal subunit protein uS7 (155 aa).

Belongs to the universal ribosomal protein uS7 family. As to quaternary structure, part of the 30S ribosomal subunit. Contacts proteins S9 and S11.

In terms of biological role, one of the primary rRNA binding proteins, it binds directly to 16S rRNA where it nucleates assembly of the head domain of the 30S subunit. Is located at the subunit interface close to the decoding center, probably blocks exit of the E-site tRNA. This Xylella fastidiosa (strain 9a5c) protein is Small ribosomal subunit protein uS7.